Here is a 1320-residue protein sequence, read N- to C-terminus: Transcriptional activator MN1 (1320 aa).

Methionine 1 carries the N-acetylmethionine modification. Disordered stretches follow at residues 1–26, 92–121, 147–219, 231–411, 423–442, 474–615, 629–819, 840–1150, and 1247–1273; these read MFGL…FNET, FGGQ…FGGP, PPFA…SLEP, LEYN…EYPI, SEPV…NQRL, NGSM…AGRL, SAWF…KDNL, GAPN…PDEI, and PWEK…SASQ. Residues 98-113 show a composition bias toward basic residues; the sequence is HHGHPGSHHPHQHHPH. Composition is skewed to low complexity over residues 202 to 214 and 291 to 309; these read SFHG…GSDS and QPPQ…QQQQ. Over residues 338-366 the composition is skewed to pro residues; that stretch reads MQPPQQAPPPPQQQPPQQPPQQQPPPPPG. Pro residues predominate over residues 498–514; that stretch reads FTPPVPDSFPSGPPLQH. Composition is skewed to low complexity over residues 523 to 550 and 564 to 578; these read QQQQ…QQQQ and RNQQ…LAQL. Gly residues-rich tracts occupy residues 582-596 and 701-710; these read GDVG…GPVG and QFGGSLGGLG. Low complexity predominate over residues 759-768; sequence SGPGVNSPPS. Gly residues predominate over residues 769 to 784; it reads AGGGGGSSGGGGGGGA. Composition is skewed to low complexity over residues 798 to 809 and 895 to 905; these read SASKLGALSLGS and GTSSSGSKASG. A compositionally biased stretch (polar residues) spans 914–930; sequence DGTSLSPNYTLESTSGN. 2 positions are modified to phosphoserine: serine 950 and serine 954. A compositionally biased stretch (low complexity) spans 973–984; the sequence is GVSPGQQQASGA. Serine 1007 is subject to Phosphoserine. Residues 1048-1066 are compositionally biased toward polar residues; it reads EVSTSYANEDEVSSSSDNP. The residue at position 1081 (serine 1081) is a Phosphoserine. The span at 1118-1128 shows a compositional bias: gly residues; that stretch reads YGGGGGPGHPG.

Interacts with PBX1, PKNOX1, ZBTB24, E2F7, RING1. As to expression, widely expressed in fetal and adult tissues. Highest expression is observed in fetal brain and skeletal muscle, and adult skeletal muscle.

Its subcellular location is the nucleus. Transcriptional activator which specifically regulates expression of TBX22 in the posterior region of the developing palate. Required during later stages of palate development for growth and medial fusion of the palatal shelves. Promotes maturation and normal function of calvarial osteoblasts, including expression of the osteoclastogenic cytokine TNFSF11/RANKL. Necessary for normal development of the membranous bones of the skull. May play a role in tumor suppression. This is Transcriptional activator MN1 (MN1) from Homo sapiens (Human).